Here is a 283-residue protein sequence, read N- to C-terminus: Thymidylate synthase (283 aa).

DUMP is bound at residue arginine 22. Cysteine 160 (nucleophile) is an active-site residue. Residues arginine 180–aspartate 183, asparagine 191, and histidine 221–tyrosine 223 contribute to the dUMP site. (6R)-5,10-methylene-5,6,7,8-tetrahydrofolate is bound at residue aspartate 183. Serine 282 is a binding site for (6R)-5,10-methylene-5,6,7,8-tetrahydrofolate.

This sequence belongs to the thymidylate synthase family. Bacterial-type ThyA subfamily. Homodimer.

It is found in the cytoplasm. It carries out the reaction dUMP + (6R)-5,10-methylene-5,6,7,8-tetrahydrofolate = 7,8-dihydrofolate + dTMP. It participates in pyrimidine metabolism; dTTP biosynthesis. Catalyzes the reductive methylation of 2'-deoxyuridine-5'-monophosphate (dUMP) to 2'-deoxythymidine-5'-monophosphate (dTMP) while utilizing 5,10-methylenetetrahydrofolate (mTHF) as the methyl donor and reductant in the reaction, yielding dihydrofolate (DHF) as a by-product. This enzymatic reaction provides an intracellular de novo source of dTMP, an essential precursor for DNA biosynthesis. The protein is Thymidylate synthase of Marinomonas sp. (strain MWYL1).